We begin with the raw amino-acid sequence, 512 residues long: Podocan-like protein 1 (512 aa).

The signal sequence occupies residues 1–26; the sequence is MAESGLAMWPSLLLLLLLPGPPPVAG. The LRRNT domain maps to 37–74; that stretch reads ESLQPLPRACPLRCSCPRVDTVDCDGLDLRVFPDNITR. A glycan (N-linked (GlcNAc...) asparagine) is linked at Asn-71. 17 LRR repeats span residues 75–96, 99–119, 125–146, 147–167, 170–193, 196–216, 217–238, 241–261, 267–288, 289–309, 312–332, 338–359, 360–380, 383–396, 409–430, 431–451, and 454–474; these read AAQH…ELSR, GLRT…PDEA, QLQH…LPRS, LRVA…TFGE, ALRS…AFRG, AIAT…SLPP, SLER…ALSR, QLRE…DATT, SLEY…LPRT, LAIL…RLHG, GLRY…PAGA, GLHT…LPRR, LRAL…DLVA, GLTE…RLAS, ALRS…LPTG, LRTL…PLAG, and QLRE…GPGT.

Belongs to the small leucine-rich proteoglycan (SLRP) family. SLRP class V subfamily. N-glycosylated.

It localises to the secreted. It is found in the extracellular space. Its subcellular location is the extracellular matrix. The sequence is that of Podocan-like protein 1 (PODNL1) from Homo sapiens (Human).